The chain runs to 339 residues: Large ribosomal subunit protein uL10 (339 aa).

The segment at 300-339 (AAAQATPSVEEREEEEKPEEEEEEEEKEEEAIEGLGALFG) is disordered. A compositionally biased stretch (acidic residues) spans 310 to 331 (EREEEEKPEEEEEEEEKEEEAI).

This sequence belongs to the universal ribosomal protein uL10 family. In terms of assembly, part of the 50S ribosomal subunit. Forms part of the ribosomal stalk which helps the ribosome interact with GTP-bound translation factors. Forms a heptameric L10(L12)2(L12)2(L12)2 complex, where L10 forms an elongated spine to which the L12 dimers bind in a sequential fashion.

Its function is as follows. Forms part of the ribosomal stalk, playing a central role in the interaction of the ribosome with GTP-bound translation factors. In Archaeoglobus fulgidus (strain ATCC 49558 / DSM 4304 / JCM 9628 / NBRC 100126 / VC-16), this protein is Large ribosomal subunit protein uL10.